The primary structure comprises 198 residues: Proteasome subunit beta 1 (198 aa).

Residues 1–8 (MSMYMPGA) constitute a propeptide, removed in mature form; by autocatalysis. Thr-9 functions as the Nucleophile in the catalytic mechanism.

It belongs to the peptidase T1B family. The 20S proteasome core is composed of 14 alpha and 14 beta subunits that assemble into four stacked heptameric rings, resulting in a barrel-shaped structure. The two inner rings, each composed of seven catalytic beta subunits, are sandwiched by two outer rings, each composed of seven alpha subunits. The catalytic chamber with the active sites is on the inside of the barrel. Has a gated structure, the ends of the cylinder being occluded by the N-termini of the alpha-subunits. Is capped at one or both ends by the proteasome regulatory ATPase, PAN.

The protein localises to the cytoplasm. It catalyses the reaction Cleavage of peptide bonds with very broad specificity.. Its activity is regulated as follows. The formation of the proteasomal ATPase PAN-20S proteasome complex, via the docking of the C-termini of PAN into the intersubunit pockets in the alpha-rings, triggers opening of the gate for substrate entry. Interconversion between the open-gate and close-gate conformations leads to a dynamic regulation of the 20S proteasome proteolysis activity. Component of the proteasome core, a large protease complex with broad specificity involved in protein degradation. The chain is Proteasome subunit beta 1 from Nitrosopumilus maritimus (strain SCM1).